A 244-amino-acid polypeptide reads, in one-letter code: DNA repair protein RecO (244 aa).

This sequence belongs to the RecO family.

Involved in DNA repair and RecF pathway recombination. In Polynucleobacter asymbioticus (strain DSM 18221 / CIP 109841 / QLW-P1DMWA-1) (Polynucleobacter necessarius subsp. asymbioticus), this protein is DNA repair protein RecO.